The sequence spans 59 residues: Large ribosomal subunit protein bL32 (59 aa).

The interval methionine 1–alanine 28 is disordered.

The protein belongs to the bacterial ribosomal protein bL32 family.

The protein is Large ribosomal subunit protein bL32 of Aromatoleum aromaticum (strain DSM 19018 / LMG 30748 / EbN1) (Azoarcus sp. (strain EbN1)).